The sequence spans 464 residues: Endo-1,4-beta-xylanase A (464 aa).

The signal sequence occupies residues 1–33 (MFRHHPTRGRRTAGLLAAALATLSAGLTAVAPA). The GH10 domain occupies 40-349 (TATLGELAEA…KPAYHAIAAA (310 aa)). The active-site Proton donor is the E166. E271 acts as the Nucleophile in catalysis. The 104-residue stretch at 354 to 457 (SPAPGGNCTA…TPADVTCTPG (104 aa)) folds into the CBM2 domain.

The protein belongs to the glycosyl hydrolase 10 (cellulase F) family. It depends on Does not require any standard metal (Mg(2+), Mn2(+), Ca(2+)). as a cofactor.

It carries out the reaction Endohydrolysis of (1-&gt;4)-beta-D-xylosidic linkages in xylans.. The protein operates within glycan degradation; xylan degradation. Completely inhibited by Hg(2+), unaffected by EDTA. Functionally, contributes to hydrolysis of hemicellulose, the major component of plant cell-walls. Hydrolyzes xylan to xylose and xylobiose. This is Endo-1,4-beta-xylanase A (xynAS9) from Streptomyces sp.